Consider the following 136-residue polypeptide: uncharacterized protein (136 aa).

This is an uncharacterized protein from Mycoplasma pneumoniae (strain ATCC 29342 / M129 / Subtype 1) (Mycoplasmoides pneumoniae).